A 125-amino-acid chain; its full sequence is Small ribosomal subunit protein uS12 (125 aa).

Asp89 bears the 3-methylthioaspartic acid mark.

Belongs to the universal ribosomal protein uS12 family. Part of the 30S ribosomal subunit. Contacts proteins S8 and S17. May interact with IF1 in the 30S initiation complex.

Functionally, with S4 and S5 plays an important role in translational accuracy. In terms of biological role, interacts with and stabilizes bases of the 16S rRNA that are involved in tRNA selection in the A site and with the mRNA backbone. Located at the interface of the 30S and 50S subunits, it traverses the body of the 30S subunit contacting proteins on the other side and probably holding the rRNA structure together. The combined cluster of proteins S8, S12 and S17 appears to hold together the shoulder and platform of the 30S subunit. The polypeptide is Small ribosomal subunit protein uS12 (Wigglesworthia glossinidia brevipalpis).